Reading from the N-terminus, the 744-residue chain is Phosphoribosylformylglycinamidine synthase subunit PurL (744 aa).

His-50 is an active-site residue. Residues Tyr-53 and Lys-92 each contribute to the ATP site. Glu-94 provides a ligand contact to Mg(2+). Substrate-binding positions include 95-98 (SHNH) and Arg-117. His-96 acts as the Proton acceptor in catalysis. Asp-118 lines the Mg(2+) pocket. Gln-241 lines the substrate pocket. Mg(2+) is bound at residue Asp-269. 313-315 (ESQ) is a binding site for substrate. 2 residues coordinate ATP: Asp-494 and Gly-531. Position 532 (Asn-532) interacts with Mg(2+). Ser-534 is a binding site for substrate.

Belongs to the FGAMS family. As to quaternary structure, monomer. Part of the FGAM synthase complex composed of 1 PurL, 1 PurQ and 2 PurS subunits.

The protein resides in the cytoplasm. It carries out the reaction N(2)-formyl-N(1)-(5-phospho-beta-D-ribosyl)glycinamide + L-glutamine + ATP + H2O = 2-formamido-N(1)-(5-O-phospho-beta-D-ribosyl)acetamidine + L-glutamate + ADP + phosphate + H(+). Its pathway is purine metabolism; IMP biosynthesis via de novo pathway; 5-amino-1-(5-phospho-D-ribosyl)imidazole from N(2)-formyl-N(1)-(5-phospho-D-ribosyl)glycinamide: step 1/2. Functionally, part of the phosphoribosylformylglycinamidine synthase complex involved in the purines biosynthetic pathway. Catalyzes the ATP-dependent conversion of formylglycinamide ribonucleotide (FGAR) and glutamine to yield formylglycinamidine ribonucleotide (FGAM) and glutamate. The FGAM synthase complex is composed of three subunits. PurQ produces an ammonia molecule by converting glutamine to glutamate. PurL transfers the ammonia molecule to FGAR to form FGAM in an ATP-dependent manner. PurS interacts with PurQ and PurL and is thought to assist in the transfer of the ammonia molecule from PurQ to PurL. The protein is Phosphoribosylformylglycinamidine synthase subunit PurL of Chelativorans sp. (strain BNC1).